The primary structure comprises 398 residues: Phosphoglycerate kinase (398 aa).

Residues 23-25, Arg-38, 61-64, Arg-122, and Arg-155 each bind substrate; these read DFN and HMGK. Residues Lys-206, Gly-297, Glu-328, and 354 to 357 contribute to the ATP site; that span reads GGDS.

It belongs to the phosphoglycerate kinase family. In terms of assembly, monomer.

The protein localises to the cytoplasm. It catalyses the reaction (2R)-3-phosphoglycerate + ATP = (2R)-3-phospho-glyceroyl phosphate + ADP. Its pathway is carbohydrate degradation; glycolysis; pyruvate from D-glyceraldehyde 3-phosphate: step 2/5. This is Phosphoglycerate kinase from Clostridium botulinum (strain Hall / ATCC 3502 / NCTC 13319 / Type A).